We begin with the raw amino-acid sequence, 403 residues long: Myeloid cell surface antigen CD33 (403 aa).

The signal sequence occupies residues 1 to 16; the sequence is MLWPLPLFLLCAGSLA. Residues 17–120 enclose the Ig-like V-type domain; the sequence is QDLEFQLVAP…DTGMYFFRVV (104 aa). The Extracellular portion of the chain corresponds to 18-240; that stretch reads DLEFQLVAPE…VTRKSGQMRE (223 aa). 3 disulfide bridges follow: cysteine 36-cysteine 169, cysteine 41-cysteine 100, and cysteine 163-cysteine 212. Residue asparagine 110 is glycosylated (N-linked (GlcNAc...) asparagine). Arginine 118 is an N-acetylneuraminate binding site. The Ig-like C2-type domain occupies 145 to 228; the sequence is PDIIIPGTLE…AGVTVERTIQ (84 aa). Asparagine 160 is a glycosylation site (N-linked (GlcNAc...) asparagine). Asparagine 230 carries N-linked (GlcNAc...) asparagine glycosylation. A helical membrane pass occupies residues 241 to 267; the sequence is LVLVAVGEATVKLLILGLCLVFLIVMF. At 268 to 403 the chain is on the cytoplasmic side; the sequence is CRRKTTKLSV…MLLCVSLTLS (136 aa).

It belongs to the immunoglobulin superfamily. SIGLEC (sialic acid binding Ig-like lectin) family. In terms of assembly, homodimer; disulfide-linked. Interacts with PTPN6/SHP-1 and PTPN11/SHP-2 upon phosphorylation. Interacts with C1QA (via C-terminus); this interaction activates CD33 inhibitory motifs. Post-translationally, glycosylated. In terms of processing, phosphorylation is involved in binding to PTPN6 and PTPN11. As to expression, expressed on myeloid precursors in the bone marrow. In the peripheral blood, mostly expressed on granulocytes.

Its subcellular location is the cell membrane. In terms of biological role, sialic-acid-binding immunoglobulin-like lectin (Siglec) that plays a role in mediating cell-cell interactions and in maintaining immune cells in a resting state. Preferentially binds sialic acid to the short O-linked glycans of certain mucins. The chain is Myeloid cell surface antigen CD33 (Cd33) from Mus musculus (Mouse).